An 889-amino-acid chain; its full sequence is DNA mismatch repair protein MutS (889 aa).

Position 641–648 (641–648 (GPNMAGKS)) interacts with ATP.

The protein belongs to the DNA mismatch repair MutS family.

Functionally, this protein is involved in the repair of mismatches in DNA. It is possible that it carries out the mismatch recognition step. This protein has a weak ATPase activity. The chain is DNA mismatch repair protein MutS from Orientia tsutsugamushi (strain Boryong) (Rickettsia tsutsugamushi).